A 589-amino-acid chain; its full sequence is Kelch-like protein 25 (589 aa).

The 69-residue stretch at T46–E114 folds into the BTB domain. Residues C149 to V250 form the BACK domain. Kelch repeat units lie at residues T296 to C340, K341 to N388, C389 to L444, L446 to S492, Q493 to N538, and K539 to K585.

As to quaternary structure, component of the BCR(KLHL25) E3 ubiquitin ligase complex, at least composed of cul3, klhl25 and rbx1.

The protein operates within protein modification; protein ubiquitination. Substrate-specific adapter of a BCR (BTB-CUL3-RBX1) E3 ubiquitin ligase complex involved in various processes, such as translation homeostasis and lipid synthesis. The BCR(KLHL25) ubiquitin ligase complex acts by mediating ubiquitination of hypophosphorylated eif4ebp1 (4E-BP1): ubiquitination and subsequent degradation of hypophosphorylated EIF4EBP1 (4E-BP1) probably serves as a homeostatic mechanism to maintain translation and prevent eIF4E inhibition when eIF4E levels are low. The BCR(KLHL25) complex also acts as a regulator of lipid synthesis by mediating ubiquitination and degradation of ACLY, thereby inhibiting lipid synthesis. This is Kelch-like protein 25 from Xenopus tropicalis (Western clawed frog).